A 297-amino-acid polypeptide reads, in one-letter code: 4-diphosphocytidyl-2-C-methyl-D-erythritol kinase (297 aa).

The active site involves Lys-6. 94–104 provides a ligand contact to ATP; the sequence is PVAGGMAGGSA. Residue Asp-136 is part of the active site.

Belongs to the GHMP kinase family. IspE subfamily.

It carries out the reaction 4-CDP-2-C-methyl-D-erythritol + ATP = 4-CDP-2-C-methyl-D-erythritol 2-phosphate + ADP + H(+). Its pathway is isoprenoid biosynthesis; isopentenyl diphosphate biosynthesis via DXP pathway; isopentenyl diphosphate from 1-deoxy-D-xylulose 5-phosphate: step 3/6. Functionally, catalyzes the phosphorylation of the position 2 hydroxy group of 4-diphosphocytidyl-2C-methyl-D-erythritol. In Nocardioides sp. (strain ATCC BAA-499 / JS614), this protein is 4-diphosphocytidyl-2-C-methyl-D-erythritol kinase.